A 648-amino-acid chain; its full sequence is Biosynthetic arginine decarboxylase (648 aa).

Position 109 is an N6-(pyridoxal phosphate)lysine (lysine 109). 291–301 (LDVGGGLGVDY) contributes to the substrate binding site.

This sequence belongs to the Orn/Lys/Arg decarboxylase class-II family. SpeA subfamily. The cofactor is Mg(2+). Pyridoxal 5'-phosphate is required as a cofactor.

It carries out the reaction L-arginine + H(+) = agmatine + CO2. Its function is as follows. Catalyzes the biosynthesis of agmatine from arginine. The polypeptide is Biosynthetic arginine decarboxylase (Prochlorococcus marinus (strain MIT 9313)).